Consider the following 546-residue polypeptide: CTP synthase (546 aa).

An amidoligase domain region spans residues 1–267; the sequence is MSKFVFVTGG…AQQTLELLNL (267 aa). Ser13 provides a ligand contact to CTP. Ser13 provides a ligand contact to UTP. Residues 14–19 and Asp71 each bind ATP; that span reads SIGKGI. Residues Asp71 and Glu141 each contribute to the Mg(2+) site. CTP contacts are provided by residues 148–150, 188–193, and Lys224; these read DIE and KTKPTQ. UTP contacts are provided by residues 188–193 and Lys224; that span reads KTKPTQ. Residues 292–534 enclose the Glutamine amidotransferase type-1 domain; it reads EIAIVGKYVQ…MKAALKGREE (243 aa). Position 354 (Gly354) interacts with L-glutamine. Cys381 serves as the catalytic Nucleophile; for glutamine hydrolysis. L-glutamine-binding positions include 382–385, Glu405, and Arg462; that span reads LGMQ. Active-site residues include His507 and Glu509.

The protein belongs to the CTP synthase family. As to quaternary structure, homotetramer.

The catalysed reaction is UTP + L-glutamine + ATP + H2O = CTP + L-glutamate + ADP + phosphate + 2 H(+). It carries out the reaction L-glutamine + H2O = L-glutamate + NH4(+). It catalyses the reaction UTP + NH4(+) + ATP = CTP + ADP + phosphate + 2 H(+). The protein operates within pyrimidine metabolism; CTP biosynthesis via de novo pathway; CTP from UDP: step 2/2. Its activity is regulated as follows. Allosterically activated by GTP, when glutamine is the substrate; GTP has no effect on the reaction when ammonia is the substrate. The allosteric effector GTP functions by stabilizing the protein conformation that binds the tetrahedral intermediate(s) formed during glutamine hydrolysis. Inhibited by the product CTP, via allosteric rather than competitive inhibition. In terms of biological role, catalyzes the ATP-dependent amination of UTP to CTP with either L-glutamine or ammonia as the source of nitrogen. Regulates intracellular CTP levels through interactions with the four ribonucleotide triphosphates. The protein is CTP synthase of Microcystis aeruginosa (strain NIES-843 / IAM M-2473).